Consider the following 475-residue polypeptide: MYPSNKKKKVWREEKERLLKMTLEERRKEYIRDYVSLSTILSWKEEMKSKGQNDEENTQEAPQMKKSLSEKVSLYRGDITLLEVDAIVNAANASLLGGGGVDGCIHRAAGPCLLAECRNLNGCETGHAKITCGYDLPAKYVIHTVGPIARGHINGSHKEDLANCYQSSLKLVKENNLRSVAFPCISTGIYGFPNEPAAVIALGTIKEWLAKNHQEVDRIIFCVFLEVDFKIYKKKMNEFFPVDDNNEGTDADMKEDSEGPEPKGLSPPHKKSKAKKPESSKDSSEDESGPEEKQTAEEMEGQSQEAGGLRFLLRNLLGLIHRDGVNTTPVPSPASEDKAEVHKDEDSAKDDNTVKDSDMTNHSVCDQELPNGQENDSAKSEGKTEAESPSSSMETEDLSPNQEDAAIVEQPEVIPLIDDQEAQEGGEAQGKDAPAVFAESQGSSEAENTSGPDVDMNSQVDGVNEPTESLQEDLQ.

The region spanning 59-240 (QEAPQMKKSL…IYKKKMNEFF (182 aa)) is the Macro domain. Residues 77–79 (GDI), 90–92 (AAN), and 97–102 (GGGGVD) each bind substrate. Residue lysine 170 forms a Glycyl lysine isopeptide (Lys-Gly) (interchain with G-Cter in ubiquitin) linkage. Residues 185-191 (ISTGIYG) and phenylalanine 224 contribute to the substrate site. 2 disordered regions span residues 241–306 (PVDD…SQEA) and 324–475 (GVNT…EDLQ). Basic and acidic residues-rich tracts occupy residues 251 to 261 (ADMKEDSEGPE) and 335 to 359 (SEDK…DSDM). Positions 360–375 (TNHSVCDQELPNGQEN) are enriched in polar residues. Over residues 376-386 (DSAKSEGKTEA) the composition is skewed to basic and acidic residues. Composition is skewed to polar residues over residues 387–402 (ESPS…SPNQ) and 440–469 (SQGS…PTES).

Belongs to the MacroD-type family. MacroD1/2-like subfamily. As to quaternary structure, interacts with ADP-ribosylated PARP1. In terms of tissue distribution, expressed in the kidney.

It is found in the nucleus. It catalyses the reaction 2''-O-acetyl-ADP-D-ribose + H2O = ADP-D-ribose + acetate + H(+). The enzyme catalyses 4-O-(ADP-D-ribosyl)-L-aspartyl-[protein] + H2O = L-aspartyl-[protein] + ADP-D-ribose + H(+). The catalysed reaction is 5-O-(ADP-D-ribosyl)-L-glutamyl-[protein] + H2O = L-glutamyl-[protein] + ADP-D-ribose + H(+). It carries out the reaction alpha-NAD(+) + H2O = ADP-D-ribose + nicotinamide + H(+). Subject to product inhibition by ADP-ribose. In terms of biological role, removes ADP-ribose from aspartate and glutamate residues in proteins bearing a single ADP-ribose moiety. Inactive towards proteins bearing poly-ADP-ribose. Deacetylates O-acetyl-ADP ribose, a signaling molecule generated by the deacetylation of acetylated lysine residues in histones and other proteins. In Mus musculus (Mouse), this protein is ADP-ribose glycohydrolase MACROD2.